The sequence spans 221 residues: MSKPSLELKGASFTLSVLHINSSDLQAVMTELDSKLAQAPQFFLGAPLVVNLSAIQHDSLNLSALKDLLISRQLVIVGITGATTVLSKQAKDLGLAIVKAGKQSSTPPPAPRQTKIVKQNIRSGQQVYAKNGDLIIFGAVGNGAEVIADGSIHIYGALRGKAMAGAAGDTSAVIIAHSLEAELVSIAGQYWLAENLQQHSSDKSGCIRLDGESLMVESLPL.

The protein belongs to the MinC family. As to quaternary structure, interacts with MinD and FtsZ.

Cell division inhibitor that blocks the formation of polar Z ring septums. Rapidly oscillates between the poles of the cell to destabilize FtsZ filaments that have formed before they mature into polar Z rings. Prevents FtsZ polymerization. The polypeptide is Probable septum site-determining protein MinC (Shewanella baltica (strain OS223)).